A 124-amino-acid polypeptide reads, in one-letter code: Fluoride-specific ion channel FluC (124 aa).

Helical transmembrane passes span 5-25 (LVVF…NLAA), 36-56 (TMII…WFAV), 70-90 (TGIL…FLLM), and 100-120 (LYVL…LAVI). Na(+) is bound by residues Gly74 and Thr77.

This sequence belongs to the fluoride channel Fluc/FEX (TC 1.A.43) family.

Its subcellular location is the cell inner membrane. It catalyses the reaction fluoride(in) = fluoride(out). Na(+) is not transported, but it plays an essential structural role and its presence is essential for fluoride channel function. Functionally, fluoride-specific ion channel. Important for reducing fluoride concentration in the cell, thus reducing its toxicity. This is Fluoride-specific ion channel FluC from Methylobacterium nodulans (strain LMG 21967 / CNCM I-2342 / ORS 2060).